A 1936-amino-acid chain; its full sequence is Trinucleotide repeat-containing gene 6C protein (1936 aa).

A compositionally biased stretch (basic and acidic residues) spans 1–31 (MEEKKKKKQEEKKKKEGAQKKAADQKTKVPE). 6 disordered regions span residues 1–160 (MEEK…PTYR), 181–256 (PSIT…NSNG), 366–412 (PQES…AMQT), 439–931 (NGSS…IRRK), 961–1063 (VIQS…VAFG), and 1115–1139 (ESTS…KTSG). Residues 34–44 (KTCSSQPQPAG) are compositionally biased toward polar residues. Low complexity predominate over residues 45-57 (TSTSTSTSTISSS). A compositionally biased stretch (polar residues) spans 58–71 (NNGKRASASGQQPA). Over residues 76 to 88 (LPREVPPRFRQQE) the composition is skewed to basic and acidic residues. Polar residues-rich tracts occupy residues 100–111 (PTGTLTSVSPTQ) and 183–217 (ITGT…GSAQ). Residues 211–1133 (MATGSAQGNF…GNAPKKGLQK (923 aa)) form a sufficient for interaction with argonaute family proteins region. Positions 218–235 (GNFTGHTKKTNGNNGTNG) are enriched in low complexity. The span at 366 to 393 (PQESTEPQTSTSQNVSFSAQPQNLNTDG) shows a compositional bias: polar residues. Low complexity-rich tracts occupy residues 394-408 (PNNT…NPIN), 439-453 (NGSS…SAEG), and 469-480 (GNSNSGFSQGNG). Positions 481–498 (DTVNSALSAKQNGSSSAV) are enriched in polar residues. Arginine 523 is modified (omega-N-methylarginine). Polar residues predominate over residues 572–585 (GWESPSVTSQNPTV). Over residues 594-614 (SWAKAASSGTTASEGSSDGSG) the composition is skewed to low complexity. Basic and acidic residues predominate over residues 625-636 (GTGEGRRRDKGI). A compositionally biased stretch (polar residues) spans 654 to 669 (LSNTGWGQTPVKQNTA). Residues 674-684 (ESPRSERKNDN) are compositionally biased toward basic and acidic residues. Serine 675 is subject to Phosphoserine. Residues 694-718 (TQASNSGGKNDGSIMNSTNTSSVSG) are compositionally biased toward polar residues. Composition is skewed to low complexity over residues 720 to 730 (VNAPPAAVPAN) and 750 to 772 (SISS…SGAA). 2 stretches are compositionally biased toward polar residues: residues 834–866 (NRSG…TNWG) and 873–888 (PQQN…NVSN). Position 924 is a phosphoserine (serine 924). A compositionally biased stretch (low complexity) spans 964–982 (SSTTTNTTTTTTTTTSNTT). Threonine 987 is subject to Phosphothreonine. Polar residues predominate over residues 1021–1035 (ENSWGEPSSPSTLVD). In terms of domain architecture, UBA spans 1140–1185 (KQDEAWIMSRLIKQLTDMGFPREPAEEALKSNNMNLDQAMSALLEK). Phosphoserine is present on serine 1218. Disordered stretches follow at residues 1291–1312 (AAQA…NSSQ), 1419–1658 (VKQP…PSSS), 1689–1732 (STWS…PSST), and 1848–1869 (TSSW…GSSH). Residues 1388-1419 (MRQQEQQVARTITNLQQQIQQHQRQLAQALLV) adopt a coiled-coil conformation. Over residues 1421 to 1430 (QPPPPPPPPH) the composition is skewed to pro residues. The silencing domain; interaction with CNOT1 and PAN3 stretch occupies residues 1467–1936 (NTFAPYPLAG…PGDLLSGESL (470 aa)). Residues 1496-1515 (DPSQSQSRLPQWTHPNSMDN) are compositionally biased toward polar residues. Residues 1578–1624 (KSDSDKISNGSSINWPPEFHPGVPWKGLQNIDPENDPDVTPGSVPTG) are required for interaction with PABPC1. A sufficient for translational repression when tethered to a target mRNA region spans residues 1578 to 1936 (KSDSDKISNG…PGDLLSGESL (359 aa)). Residues 1588–1606 (SSINWPPEFHPGVPWKGLQ) are PABPC1-interacting motif-2 (PAM2). Residues 1623-1633 (TGPTINTTIQD) show a composition bias toward polar residues. Over residues 1641-1658 (SGGSSPPSSQNATLPSSS) the composition is skewed to low complexity. Residues 1689-1703 (STWSSGPTSHTQASL) are compositionally biased toward polar residues. The RRM domain occupies 1811 to 1878 (AQKSLHMCVL…HGLVRSDAGH (68 aa)). An interaction with the CCR4-NOT complex region spans residues 1842–1936 (GQALPPTSSW…PGDLLSGESL (95 aa)). Residues 1848–1865 (TSSWQSSSASSQPRLSAA) are compositionally biased toward low complexity.

The protein belongs to the GW182 family. In terms of assembly, interacts with one or more of the argonaute family proteins AGO1, AGO2, AGO3 and AGO4. Interacts with PABPC1 and EIF4G1. Interacts with CNOT1; the interaction is direct and mediates the association with the CCR4-NOT complex. Interacts with PAN3; the interaction mediates the association with the PAN complex.

Functionally, plays a role in RNA-mediated gene silencing by micro-RNAs (miRNAs). Required for miRNA-dependent translational repression of complementary mRNAs by argonaute family proteins. As scaffoldng protein associates with argonaute proteins bound to partially complementary mRNAs and simultaneously can recruit CCR4-NOT and PAN deadenylase complexes. This Homo sapiens (Human) protein is Trinucleotide repeat-containing gene 6C protein (TNRC6C).